Here is a 203-residue protein sequence, read N- to C-terminus: CASP-like protein 1B1 (203 aa).

At 1–24 (MALVNAEKPEVGSSPSSLGPRNKS) the chain is on the cytoplasmic side. The chain crosses the membrane as a helical span at residues 25 to 45 (WVLLMLRFVAFLATAAATIVM). Residues 46–76 (AANRETKTFVVATIGSTPIKATVTAKFQHTP) are Extracellular-facing. Residues 77-97 (AFVFFVIANGMGSIHNLVMIA) form a helical membrane-spanning segment. At 98–114 (GDTFVRKFDYKGLRWVT) the chain is on the cytoplasmic side. The chain crosses the membrane as a helical span at residues 115–135 (VAILDMLTAALISGGVNAAVF). Over 136 to 165 (MAELGKNGNSHAKWNKICDRFGSFCDHGGA) the chain is Extracellular. The chain crosses the membrane as a helical span at residues 166-186 (AIIASFIGLLLMLVISIISII). Residues 187-203 (KLLKPKSPLVDSHVLAP) are Cytoplasmic-facing.

The protein belongs to the Casparian strip membrane proteins (CASP) family. As to quaternary structure, homodimer and heterodimers.

It is found in the cell membrane. The sequence is that of CASP-like protein 1B1 from Ricinus communis (Castor bean).